The sequence spans 309 residues: MGINLKVSRPKAGSNINMSNTFHTIGLIGKPNHKGTTLTLKRLHHWLSMQGYKVLVEERVAGELGPQVQSVDLLEIGEQCDLAIVVGGDGNMLGAARVLARFSVGVIGVNRGNLGFLTDLPPDSFEEALSKVLEGEFEIEQRFLLEAEVHRHGELKSSNTAVNEAVLHPGKIAYMIEFEVYIDDKFMYSQRADGIIISTPTGSTAYSLSAGGAILTPNLSAVILVPMFPHTLSCRPIVVDAASIIKLVVSPHNSDNLEVSCDGHVHLSVLPGDEIIIKRSQETLRLVHPKGHNYFHVLRTKLGWGSKLF.

The active-site Proton acceptor is the Asp-89. NAD(+) is bound by residues 89–90 (DG), 163–164 (NE), Arg-191, Asp-193, and 204–209 (TAYSLS).

Belongs to the NAD kinase family. It depends on a divalent metal cation as a cofactor.

Its subcellular location is the cytoplasm. The catalysed reaction is NAD(+) + ATP = ADP + NADP(+) + H(+). Functionally, involved in the regulation of the intracellular balance of NAD and NADP, and is a key enzyme in the biosynthesis of NADP. Catalyzes specifically the phosphorylation on 2'-hydroxyl of the adenosine moiety of NAD to yield NADP. This Shewanella halifaxensis (strain HAW-EB4) protein is NAD kinase.